We begin with the raw amino-acid sequence, 116 residues long: uncharacterized protein (116 aa).

This is an uncharacterized protein from Methanocaldococcus jannaschii (strain ATCC 43067 / DSM 2661 / JAL-1 / JCM 10045 / NBRC 100440) (Methanococcus jannaschii).